Consider the following 351-residue polypeptide: S-adenosylmethionine:tRNA ribosyltransferase-isomerase (351 aa).

The protein belongs to the QueA family. As to quaternary structure, monomer.

It localises to the cytoplasm. The catalysed reaction is 7-aminomethyl-7-carbaguanosine(34) in tRNA + S-adenosyl-L-methionine = epoxyqueuosine(34) in tRNA + adenine + L-methionine + 2 H(+). It participates in tRNA modification; tRNA-queuosine biosynthesis. Transfers and isomerizes the ribose moiety from AdoMet to the 7-aminomethyl group of 7-deazaguanine (preQ1-tRNA) to give epoxyqueuosine (oQ-tRNA). This is S-adenosylmethionine:tRNA ribosyltransferase-isomerase from Acinetobacter baumannii (strain SDF).